Here is a 35-residue protein sequence, read N- to C-terminus: MFDDQDLGFFANFLGIFIFILVIAYHFVMADPKFE.

The Lumenal segment spans residues 1–8; sequence MFDDQDLG. Residues 9–29 form a helical membrane-spanning segment; it reads FFANFLGIFIFILVIAYHFVM. Residues 30–35 are Cytoplasmic-facing; it reads ADPKFE.

The protein belongs to the OST4 family. Component of the oligosaccharyltransferase (OST) complex.

It localises to the endoplasmic reticulum membrane. Subunit of the oligosaccharyl transferase (OST) complex that catalyzes the initial transfer of a defined glycan (Glc(3)Man(9)GlcNAc(2) in eukaryotes) from the lipid carrier dolichol-pyrophosphate to an asparagine residue within an Asn-X-Ser/Thr consensus motif in nascent polypeptide chains, the first step in protein N-glycosylation. N-glycosylation occurs cotranslationally and the complex associates with the Sec61 complex at the channel-forming translocon complex that mediates protein translocation across the endoplasmic reticulum (ER). All subunits are required for a maximal enzyme activity. The protein is Dolichyl-diphosphooligosaccharide--protein glycosyltransferase subunit 4C (OST4C) of Arabidopsis thaliana (Mouse-ear cress).